The sequence spans 88 residues: Exodeoxyribonuclease 7 small subunit (88 aa).

The interval 69–88 (DPMRPDDGEPFDPSIVSTSQ) is disordered.

It belongs to the XseB family. As to quaternary structure, heterooligomer composed of large and small subunits.

The protein resides in the cytoplasm. It carries out the reaction Exonucleolytic cleavage in either 5'- to 3'- or 3'- to 5'-direction to yield nucleoside 5'-phosphates.. Bidirectionally degrades single-stranded DNA into large acid-insoluble oligonucleotides, which are then degraded further into small acid-soluble oligonucleotides. This chain is Exodeoxyribonuclease 7 small subunit, found in Xylella fastidiosa (strain M12).